A 483-amino-acid polypeptide reads, in one-letter code: Aspartyl/glutamyl-tRNA(Asn/Gln) amidotransferase subunit B (483 aa).

Belongs to the GatB/GatE family. GatB subfamily. Heterotrimer of A, B and C subunits.

The enzyme catalyses L-glutamyl-tRNA(Gln) + L-glutamine + ATP + H2O = L-glutaminyl-tRNA(Gln) + L-glutamate + ADP + phosphate + H(+). It catalyses the reaction L-aspartyl-tRNA(Asn) + L-glutamine + ATP + H2O = L-asparaginyl-tRNA(Asn) + L-glutamate + ADP + phosphate + 2 H(+). Functionally, allows the formation of correctly charged Asn-tRNA(Asn) or Gln-tRNA(Gln) through the transamidation of misacylated Asp-tRNA(Asn) or Glu-tRNA(Gln) in organisms which lack either or both of asparaginyl-tRNA or glutaminyl-tRNA synthetases. The reaction takes place in the presence of glutamine and ATP through an activated phospho-Asp-tRNA(Asn) or phospho-Glu-tRNA(Gln). This Rickettsia typhi (strain ATCC VR-144 / Wilmington) protein is Aspartyl/glutamyl-tRNA(Asn/Gln) amidotransferase subunit B.